The following is a 332-amino-acid chain: Homeobox protein DLX-2 (332 aa).

Polar residues predominate over residues Ala19–Gln28. The tract at residues Ala19–Gly83 is disordered. A compositionally biased stretch (low complexity) spans Asn40–Ser49. Positions Glu55–His75 are enriched in polar residues. The segment at residues Val155–Trp214 is a DNA-binding region (homeobox). Disordered stretches follow at residues Ile219 to Ser272 and Pro304 to Phe332. Ser235 carries the phosphoserine modification. Residues Ala253–Ser266 are compositionally biased toward gly residues. The segment covering Ala310 to Ala320 has biased composition (basic residues).

This sequence belongs to the distal-less homeobox family. Interacts (via homeobox DNA-binding domain) with POU4F2; this interaction enhances retinal ganglion cell (RGC) differentiation. Post-translationally, phosphorylated by serine/threonine kinases. As to expression, expressed only in neural and other ectodermal structures of the head: the brain, the vomeronasal organ, and the preameloblasts of the teeth. Primarily expressed in the germinal cells of the ventral forebrain in the midgestational embryo, and in both dorsal and ventral ventricular zones in late embryogenesis and early postnatal life. Expressed in the inner nuclear layer of the retina.

The protein resides in the nucleus. Acts as a transcriptional activator. Activates transcription of CGA/alpha-GSU, via binding to the downstream activin regulatory element (DARE) in the gene promoter. Plays a role in terminal differentiation of interneurons, such as amacrine and bipolar cells in the developing retina. Likely to play a regulatory role in the development of the ventral forebrain. May play a role in craniofacial patterning and morphogenesis. This Mus musculus (Mouse) protein is Homeobox protein DLX-2 (Dlx2).